Here is a 147-residue protein sequence, read N- to C-terminus: Large ribosomal subunit protein bL9 (147 aa).

This sequence belongs to the bacterial ribosomal protein bL9 family.

Its function is as follows. Binds to the 23S rRNA. This Halothermothrix orenii (strain H 168 / OCM 544 / DSM 9562) protein is Large ribosomal subunit protein bL9.